Here is a 381-residue protein sequence, read N- to C-terminus: DNA replication and repair protein RecF (381 aa).

30 to 37 (GENAQGKT) lines the ATP pocket.

This sequence belongs to the RecF family.

The protein localises to the cytoplasm. In terms of biological role, the RecF protein is involved in DNA metabolism; it is required for DNA replication and normal SOS inducibility. RecF binds preferentially to single-stranded, linear DNA. It also seems to bind ATP. The polypeptide is DNA replication and repair protein RecF (Lactobacillus delbrueckii subsp. bulgaricus (strain ATCC BAA-365 / Lb-18)).